The following is a 344-amino-acid chain: tRNA N6-adenosine threonylcarbamoyltransferase (344 aa).

Fe cation is bound by residues H113 and H117. Substrate contacts are provided by residues L135 to G139, D169, G182, D186, and N278. Position 306 (D306) interacts with Fe cation. Residues E325–F344 form a disordered region. Over residues S326 to F344 the composition is skewed to polar residues.

Belongs to the KAE1 / TsaD family. Fe(2+) is required as a cofactor.

The protein resides in the cytoplasm. It carries out the reaction L-threonylcarbamoyladenylate + adenosine(37) in tRNA = N(6)-L-threonylcarbamoyladenosine(37) in tRNA + AMP + H(+). In terms of biological role, required for the formation of a threonylcarbamoyl group on adenosine at position 37 (t(6)A37) in tRNAs that read codons beginning with adenine. Is involved in the transfer of the threonylcarbamoyl moiety of threonylcarbamoyl-AMP (TC-AMP) to the N6 group of A37, together with TsaE and TsaB. TsaD likely plays a direct catalytic role in this reaction. The protein is tRNA N6-adenosine threonylcarbamoyltransferase of Corynebacterium glutamicum (strain ATCC 13032 / DSM 20300 / JCM 1318 / BCRC 11384 / CCUG 27702 / LMG 3730 / NBRC 12168 / NCIMB 10025 / NRRL B-2784 / 534).